We begin with the raw amino-acid sequence, 370 residues long: tRNA-specific 2-thiouridylase MnmA (370 aa).

ATP contacts are provided by residues 24–31 and leucine 50; that span reads AMSGGVDS. The Nucleophile role is filled by cysteine 118. Cysteine 118 and cysteine 214 are disulfide-bonded. An ATP-binding site is contributed by glycine 142. The tract at residues 164–166 is interaction with tRNA; that stretch reads KDQ. Catalysis depends on cysteine 214, which acts as the Cysteine persulfide intermediate.

It belongs to the MnmA/TRMU family.

The protein resides in the cytoplasm. It carries out the reaction S-sulfanyl-L-cysteinyl-[protein] + uridine(34) in tRNA + AH2 + ATP = 2-thiouridine(34) in tRNA + L-cysteinyl-[protein] + A + AMP + diphosphate + H(+). Catalyzes the 2-thiolation of uridine at the wobble position (U34) of tRNA, leading to the formation of s(2)U34. The protein is tRNA-specific 2-thiouridylase MnmA of Ehrlichia ruminantium (strain Welgevonden).